A 109-amino-acid chain; its full sequence is Thioredoxin 2 (109 aa).

One can recognise a Thioredoxin domain in the interval 2–109; the sequence is SGKYFEATDQ…IAKKLDEHIG (108 aa). A disulfide bond links C33 and C36.

This sequence belongs to the thioredoxin family.

Its function is as follows. Participates in various redox reactions through the reversible oxidation of its active center dithiol to a disulfide and catalyzes dithiol-disulfide exchange reactions. In Chlorobaculum tepidum (strain ATCC 49652 / DSM 12025 / NBRC 103806 / TLS) (Chlorobium tepidum), this protein is Thioredoxin 2 (trx2).